The primary structure comprises 388 residues: GTPase Obg (388 aa).

One can recognise an Obg domain in the interval 1–159 (MKFVDEAVIR…RSLKLELLLL (159 aa)). In terms of domain architecture, OBG-type G spans 160–333 (ADVGLLGMPN…LALKLLDYIA (174 aa)). GTP contacts are provided by residues 166 to 173 (GMPNAGKS), 191 to 195 (FTTLV), 213 to 216 (DIPG), 283 to 286 (NKTD), and 314 to 316 (SAY). Positions 173 and 193 each coordinate Mg(2+).

This sequence belongs to the TRAFAC class OBG-HflX-like GTPase superfamily. OBG GTPase family. As to quaternary structure, monomer. Mg(2+) serves as cofactor.

The protein resides in the cytoplasm. In terms of biological role, an essential GTPase which binds GTP, GDP and possibly (p)ppGpp with moderate affinity, with high nucleotide exchange rates and a fairly low GTP hydrolysis rate. Plays a role in control of the cell cycle, stress response, ribosome biogenesis and in those bacteria that undergo differentiation, in morphogenesis control. This is GTPase Obg from Shewanella putrefaciens (strain CN-32 / ATCC BAA-453).